Reading from the N-terminus, the 87-residue chain is Putative defensin-like protein 169 (87 aa).

The signal sequence occupies residues 1–21 (MKKTFSFTVLILFVIPLLVTG). 4 cysteine pairs are disulfide-bonded: Cys-36–Cys-86, Cys-48–Cys-74, Cys-53–Cys-80, and Cys-57–Cys-82.

The protein belongs to the DEFL family.

It is found in the secreted. The polypeptide is Putative defensin-like protein 169 (Arabidopsis thaliana (Mouse-ear cress)).